The following is a 101-amino-acid chain: MGRGVSSGGGQSSLGYLFGGGEAPKSAEKPAPVQKPAPSSSAEKLKEIPAGIQSSKANNYMRAEGQNCGNFLTDRPSTKVQAAPGGGSSLDYLFSGNKDGK.

The segment covering 1–22 (MGRGVSSGGGQSSLGYLFGGGE) has biased composition (gly residues). Disordered stretches follow at residues 1-54 (MGRG…GIQS) and 73-101 (TDRPSTKVQAAPGGGSSLDYLFSGNKDGK).

This sequence belongs to the SPIRAL1 family.

Functionally, acts in maintaining the cortical microtubules organization essential for anisotropic cell growth. The sequence is that of Protein SPIRAL1-like 3 from Oryza sativa subsp. japonica (Rice).